Consider the following 274-residue polypeptide: SPbeta prophage-derived uncharacterized protein YomD (274 aa).

The polypeptide is SPbeta prophage-derived uncharacterized protein YomD (yomD) (Bacillus subtilis (strain 168)).